The sequence spans 199 residues: Recombination protein RecR (199 aa).

A C4-type zinc finger spans residues 57–72; the sequence is CSVCGNLTDDDPCNIC. The 97-residue stretch at 80–176 folds into the Toprim domain; that stretch reads STVLVVEDSK…TVTRLARGLA (97 aa).

The protein belongs to the RecR family.

In terms of biological role, may play a role in DNA repair. It seems to be involved in an RecBC-independent recombinational process of DNA repair. It may act with RecF and RecO. In Streptococcus mutans serotype c (strain ATCC 700610 / UA159), this protein is Recombination protein RecR.